A 116-amino-acid chain; its full sequence is MARSMKLACVVLVMCMIVAPMAEGAISCGAVTGDLSPCLTYLTGGPGPSPQCCGGVKKLLAAANTTPDRQAACNCMKSAASSITKLNTNNAAALPGKCGVNIPYKISTSTNCNTVK.

An N-terminal signal peptide occupies residues 1–24 (MARSMKLACVVLVMCMIVAPMAEG). 4 disulfides stabilise this stretch: cysteine 28/cysteine 75, cysteine 38/cysteine 52, cysteine 53/cysteine 98, and cysteine 73/cysteine 112.

This sequence belongs to the plant LTP family.

Plant non-specific lipid-transfer proteins transfer phospholipids as well as galactolipids across membranes. May play a role in wax or cutin deposition in the cell walls of expanding epidermal cells and certain secretory tissues. This Lens culinaris (Lentil) protein is Non-specific lipid-transfer protein 5.